An 885-amino-acid polypeptide reads, in one-letter code: Chitin synthase 3 (885 aa).

Positions 1–59 are disordered; it reads MASQYPGHQLDDIPSTNVYRPPPRHEDDEAEHALLHQNSAYQSQYDDPHSRPLTPGQES. Basic and acidic residues predominate over residues 23–34; that stretch reads PRHEDDEAEHAL. Residues 36–45 show a composition bias toward polar residues; it reads HQNSAYQSQY. The next 6 helical transmembrane spans lie at 565-585, 620-640, 650-670, 707-727, 735-755, and 837-857; these read FFLH…WFSL, IINT…FILA, VAYI…IVLS, IVII…FLYM, SFAQ…IYAF, and LVAT…SDSL.

It belongs to the chitin synthase family. Class III subfamily.

The protein resides in the cell membrane. It catalyses the reaction [(1-&gt;4)-N-acetyl-beta-D-glucosaminyl](n) + UDP-N-acetyl-alpha-D-glucosamine = [(1-&gt;4)-N-acetyl-beta-D-glucosaminyl](n+1) + UDP + H(+). Its function is as follows. Polymerizes chitin, a structural polymer of the cell wall and septum, by transferring the sugar moiety of UDP-GlcNAc to the non-reducing end of the growing chitin polymer. Is not only stable at different pH, but is also able to tolerate a broad temperature range. With CHS2, plays an important role in virulence. The chain is Chitin synthase 3 from Exophiala dermatitidis (Black yeast-like fungus).